The primary structure comprises 313 residues: Ornithine carbamoyltransferase (313 aa).

Carbamoyl phosphate is bound by residues 57–60 (STRT), Arg108, and 135–138 (HPTQ). Residues Asn167, Asp231, and 235 to 236 (SM) contribute to the L-ornithine site. Residues 272–273 (CL) and Arg300 contribute to the carbamoyl phosphate site.

It belongs to the aspartate/ornithine carbamoyltransferase superfamily. OTCase family.

It localises to the cytoplasm. The catalysed reaction is carbamoyl phosphate + L-ornithine = L-citrulline + phosphate + H(+). Its pathway is amino-acid biosynthesis; L-arginine biosynthesis; L-arginine from L-ornithine and carbamoyl phosphate: step 1/3. In terms of biological role, reversibly catalyzes the transfer of the carbamoyl group from carbamoyl phosphate (CP) to the N(epsilon) atom of ornithine (ORN) to produce L-citrulline. This chain is Ornithine carbamoyltransferase, found in Thermotoga maritima (strain ATCC 43589 / DSM 3109 / JCM 10099 / NBRC 100826 / MSB8).